We begin with the raw amino-acid sequence, 68 residues long: Large ribosomal subunit protein bL28 (68 aa).

The segment at 1-30 (MAKICDHCGKKPQSGNNVSHANNKSKRRFE) is disordered. Polar residues predominate over residues 13-22 (QSGNNVSHAN).

Belongs to the bacterial ribosomal protein bL28 family.

The polypeptide is Large ribosomal subunit protein bL28 (Solidesulfovibrio magneticus (strain ATCC 700980 / DSM 13731 / RS-1) (Desulfovibrio magneticus)).